We begin with the raw amino-acid sequence, 190 residues long: Holliday junction branch migration complex subunit RuvA (190 aa).

The tract at residues 1–64 (MIGKLTGTLL…EDAQLLYGFG (64 aa)) is domain I. The interval 65 to 143 (THSERQAFRE…ADTGAQSLFV (79 aa)) is domain II. Residues 144–148 (NNDQN) are flexible linker. Residues 148-190 (NDIVQALMALGYSDKDAAAALKKLPPDVGVTEGIKLALKALAK) are domain III.

This sequence belongs to the RuvA family. In terms of assembly, homotetramer. Forms an RuvA(8)-RuvB(12)-Holliday junction (HJ) complex. HJ DNA is sandwiched between 2 RuvA tetramers; dsDNA enters through RuvA and exits via RuvB. An RuvB hexamer assembles on each DNA strand where it exits the tetramer. Each RuvB hexamer is contacted by two RuvA subunits (via domain III) on 2 adjacent RuvB subunits; this complex drives branch migration. In the full resolvosome a probable DNA-RuvA(4)-RuvB(12)-RuvC(2) complex forms which resolves the HJ.

It is found in the cytoplasm. Functionally, the RuvA-RuvB-RuvC complex processes Holliday junction (HJ) DNA during genetic recombination and DNA repair, while the RuvA-RuvB complex plays an important role in the rescue of blocked DNA replication forks via replication fork reversal (RFR). RuvA specifically binds to HJ cruciform DNA, conferring on it an open structure. The RuvB hexamer acts as an ATP-dependent pump, pulling dsDNA into and through the RuvAB complex. HJ branch migration allows RuvC to scan DNA until it finds its consensus sequence, where it cleaves and resolves the cruciform DNA. The polypeptide is Holliday junction branch migration complex subunit RuvA (Delftia acidovorans (strain DSM 14801 / SPH-1)).